A 433-amino-acid polypeptide reads, in one-letter code: Serine carboxypeptidase-like 11 (433 aa).

The first 21 residues, 1 to 21, serve as a signal peptide directing secretion; that stretch reads MELTLKLLVLLLFILNHHVGS. 3 cysteine pairs are disulfide-bonded: C80–C322, C243–C257, and C281–C288. Residue N101 is glycosylated (N-linked (GlcNAc...) asparagine). Residue S176 is part of the active site. N-linked (GlcNAc...) asparagine glycosylation is present at N342. Residue D358 is part of the active site. Residue N374 is glycosylated (N-linked (GlcNAc...) asparagine). H411 is a catalytic residue.

This sequence belongs to the peptidase S10 family. Ubiquitous.

It is found in the secreted. Probable carboxypeptidase. This is Serine carboxypeptidase-like 11 (SCPL11) from Arabidopsis thaliana (Mouse-ear cress).